The chain runs to 320 residues: MIKKIGVLTSGGDAPGMNAAIRGVVRTALGAGLEVFGIYDGYQGLYEDRIKQLDRSSVSDVINRGGTFLGSARFPQFREVEVREKAIENLKKHGIEALVVIGGDGSYMGAKKLTEMGFPCIGLPGTIDNDIAGTDYTIGYLTALNTVIEAIDRLRDTSSSHQRISIVEIMGRHCGDLTLTSAIAGGCEYIITPETGLNMEQLISNIKDGIAKGKKHAIIALTELMMDANKLAKEIESATGRETRATVLGHIQRGGKPTAFDRVLASRMGNYAVHLLMEGHGGRCVGIQKEQLVHHDIIDAIENMKRPVRTDLYKVAEELF.

Gly12 lines the ATP pocket. An ADP-binding site is contributed by 22-26 (RGVVR). ATP-binding positions include 73 to 74 (RF) and 103 to 106 (GDGS). Asp104 contributes to the Mg(2+) binding site. 126–128 (TID) lines the substrate pocket. The Proton acceptor role is filled by Asp128. Residue Arg155 coordinates ADP. Substrate-binding positions include Arg163 and 170 to 172 (MGR). ADP is bound by residues 186-188 (GCE), Lys212, and 214-216 (KKH). Substrate is bound by residues Glu223, Arg244, and 250–253 (HIQR).

It belongs to the phosphofructokinase type A (PFKA) family. ATP-dependent PFK group I subfamily. Prokaryotic clade 'B1' sub-subfamily. Homotetramer. The cofactor is Mg(2+).

The protein localises to the cytoplasm. The catalysed reaction is beta-D-fructose 6-phosphate + ATP = beta-D-fructose 1,6-bisphosphate + ADP + H(+). The protein operates within carbohydrate degradation; glycolysis; D-glyceraldehyde 3-phosphate and glycerone phosphate from D-glucose: step 3/4. With respect to regulation, allosterically activated by ADP and other diphosphonucleosides, and allosterically inhibited by phosphoenolpyruvate. Catalyzes the phosphorylation of D-fructose 6-phosphate to fructose 1,6-bisphosphate by ATP, the first committing step of glycolysis. The chain is ATP-dependent 6-phosphofructokinase from Vibrio cholerae serotype O1 (strain ATCC 39315 / El Tor Inaba N16961).